Consider the following 389-residue polypeptide: Histidinol-phosphate aminotransferase (389 aa).

Position 233 is an N6-(pyridoxal phosphate)lysine (K233).

Belongs to the class-II pyridoxal-phosphate-dependent aminotransferase family. The cofactor is pyridoxal 5'-phosphate.

The catalysed reaction is L-histidinol phosphate + 2-oxoglutarate = 3-(imidazol-4-yl)-2-oxopropyl phosphate + L-glutamate. It participates in amino-acid biosynthesis; L-histidine biosynthesis; L-histidine from 5-phospho-alpha-D-ribose 1-diphosphate: step 7/9. The sequence is that of Histidinol-phosphate aminotransferase (HIS5) from Candida maltosa (Yeast).